A 462-amino-acid chain; its full sequence is MQYFPIFVDTKELNCLVVGAGEVAARKVELLLKTSATITVVAPWACDTVQRLADEGQVTLHTRGYESSDLTAKQLVFVATDDSQLNIDIHHQAKAQNILVNVVDNTPLCQFITPSIVDRSPIIIAMSSGGVAPVLLRYLRQKLESVIPQKVSLLGQFSEKFRETVKARFNSVTKRRYFWEDILDGDVAEQVLQGNNSKAEQMMQDKLALDEHDSGKGEVYLVGAGPGDPDLLTFRALRLMQKADVVVYDRLVSKEILELVRRDAEKIYVGKARSLHTVPQDEINALLADLALKGNRVVRLKGGDPFIFGRGGEEIETLVEKGVSFQVVPGITAASGAASYAGIPLTHRDHAKSVVFATGHLRDNSINLNWPMLAQPEQTTVFYMGLTGLPVICEKLIQHGLPDTTEIALVQSATTTEQKVVAGNLANIQQKVAEAGIKPPALIIVGSVVSLREKLNWFGADA.

A precorrin-2 dehydrogenase /sirohydrochlorin ferrochelatase region spans residues 1-203; it reads MQYFPIFVDT…GNNSKAEQMM (203 aa). Residues 22–23 and 43–44 contribute to the NAD(+) site; these read EV and PW. Position 128 is a phosphoserine (S128). The interval 217 to 462 is uroporphyrinogen-III C-methyltransferase; the sequence is GEVYLVGAGP…EKLNWFGADA (246 aa). P226 contacts S-adenosyl-L-methionine. D249 functions as the Proton acceptor in the catalytic mechanism. K271 functions as the Proton donor in the catalytic mechanism. Residues 302 to 304, I307, 332 to 333, M384, and A413 contribute to the S-adenosyl-L-methionine site; these read GGD and TA.

This sequence in the N-terminal section; belongs to the precorrin-2 dehydrogenase / sirohydrochlorin ferrochelatase family. It in the C-terminal section; belongs to the precorrin methyltransferase family.

It carries out the reaction uroporphyrinogen III + 2 S-adenosyl-L-methionine = precorrin-2 + 2 S-adenosyl-L-homocysteine + H(+). It catalyses the reaction precorrin-2 + NAD(+) = sirohydrochlorin + NADH + 2 H(+). The catalysed reaction is siroheme + 2 H(+) = sirohydrochlorin + Fe(2+). Its pathway is cofactor biosynthesis; adenosylcobalamin biosynthesis; precorrin-2 from uroporphyrinogen III: step 1/1. The protein operates within cofactor biosynthesis; adenosylcobalamin biosynthesis; sirohydrochlorin from precorrin-2: step 1/1. It participates in porphyrin-containing compound metabolism; siroheme biosynthesis; precorrin-2 from uroporphyrinogen III: step 1/1. It functions in the pathway porphyrin-containing compound metabolism; siroheme biosynthesis; siroheme from sirohydrochlorin: step 1/1. Its pathway is porphyrin-containing compound metabolism; siroheme biosynthesis; sirohydrochlorin from precorrin-2: step 1/1. Multifunctional enzyme that catalyzes the SAM-dependent methylations of uroporphyrinogen III at position C-2 and C-7 to form precorrin-2 via precorrin-1. Then it catalyzes the NAD-dependent ring dehydrogenation of precorrin-2 to yield sirohydrochlorin. Finally, it catalyzes the ferrochelation of sirohydrochlorin to yield siroheme. This chain is Siroheme synthase, found in Pseudoalteromonas atlantica (strain T6c / ATCC BAA-1087).